A 95-amino-acid polypeptide reads, in one-letter code: Aspartyl/glutamyl-tRNA(Asn/Gln) amidotransferase subunit C (95 aa).

It belongs to the GatC family. Heterotrimer of A, B and C subunits.

It carries out the reaction L-glutamyl-tRNA(Gln) + L-glutamine + ATP + H2O = L-glutaminyl-tRNA(Gln) + L-glutamate + ADP + phosphate + H(+). The enzyme catalyses L-aspartyl-tRNA(Asn) + L-glutamine + ATP + H2O = L-asparaginyl-tRNA(Asn) + L-glutamate + ADP + phosphate + 2 H(+). In terms of biological role, allows the formation of correctly charged Asn-tRNA(Asn) or Gln-tRNA(Gln) through the transamidation of misacylated Asp-tRNA(Asn) or Glu-tRNA(Gln) in organisms which lack either or both of asparaginyl-tRNA or glutaminyl-tRNA synthetases. The reaction takes place in the presence of glutamine and ATP through an activated phospho-Asp-tRNA(Asn) or phospho-Glu-tRNA(Gln). The polypeptide is Aspartyl/glutamyl-tRNA(Asn/Gln) amidotransferase subunit C (Paracoccus denitrificans (strain Pd 1222)).